We begin with the raw amino-acid sequence, 334 residues long: Holliday junction branch migration complex subunit RuvB (334 aa).

The large ATPase domain (RuvB-L) stretch occupies residues 4–184 (ADRLIQPQLQ…FGIPLRLEFY (181 aa)). Residues Arg-24, Gly-65, Lys-68, Thr-69, Thr-70, 131–133 (EDY), Arg-174, Tyr-184, and Arg-221 contribute to the ATP site. Thr-69 is a Mg(2+) binding site. Residues 185-255 (NIKDLSTIVT…VADHALDLLD (71 aa)) form a small ATPAse domain (RuvB-S) region. The tract at residues 258-334 (NEGFDYMDRK…YQHFQLIKPE (77 aa)) is head domain (RuvB-H). 3 residues coordinate DNA: Arg-294, Arg-313, and Arg-318.

Belongs to the RuvB family. In terms of assembly, homohexamer. Forms an RuvA(8)-RuvB(12)-Holliday junction (HJ) complex. HJ DNA is sandwiched between 2 RuvA tetramers; dsDNA enters through RuvA and exits via RuvB. An RuvB hexamer assembles on each DNA strand where it exits the tetramer. Each RuvB hexamer is contacted by two RuvA subunits (via domain III) on 2 adjacent RuvB subunits; this complex drives branch migration. In the full resolvosome a probable DNA-RuvA(4)-RuvB(12)-RuvC(2) complex forms which resolves the HJ.

It localises to the cytoplasm. The enzyme catalyses ATP + H2O = ADP + phosphate + H(+). Functionally, the RuvA-RuvB-RuvC complex processes Holliday junction (HJ) DNA during genetic recombination and DNA repair, while the RuvA-RuvB complex plays an important role in the rescue of blocked DNA replication forks via replication fork reversal (RFR). RuvA specifically binds to HJ cruciform DNA, conferring on it an open structure. The RuvB hexamer acts as an ATP-dependent pump, pulling dsDNA into and through the RuvAB complex. RuvB forms 2 homohexamers on either side of HJ DNA bound by 1 or 2 RuvA tetramers; 4 subunits per hexamer contact DNA at a time. Coordinated motions by a converter formed by DNA-disengaged RuvB subunits stimulates ATP hydrolysis and nucleotide exchange. Immobilization of the converter enables RuvB to convert the ATP-contained energy into a lever motion, pulling 2 nucleotides of DNA out of the RuvA tetramer per ATP hydrolyzed, thus driving DNA branch migration. The RuvB motors rotate together with the DNA substrate, which together with the progressing nucleotide cycle form the mechanistic basis for DNA recombination by continuous HJ branch migration. Branch migration allows RuvC to scan DNA until it finds its consensus sequence, where it cleaves and resolves cruciform DNA. The polypeptide is Holliday junction branch migration complex subunit RuvB (Shewanella putrefaciens (strain CN-32 / ATCC BAA-453)).